The primary structure comprises 175 residues: Respiratory supercomplex factor 1-B, mitochondrial (175 aa).

Residues 3–94 form the HIG1 domain; sequence DQADVLADPD…TERKQRREFE (92 aa). Helical transmembrane passes span 30-46 and 66-83; these read PLIP…LYRA and IYAQ…GMYY. Residues 83–115 adopt a coiled-coil conformation; the sequence is YKTERKQRREFEKKVEERKAQEKRDAWLRELEA.

Belongs to the RCF1 family. Associates with the respiratory chain complex III/complex IV supercomplex.

It localises to the mitochondrion membrane. Its function is as follows. Cytochrome c oxidase subunit which plays a role in assembly of respiratory supercomplexes. This is Respiratory supercomplex factor 1-B, mitochondrial (rcf1-B) from Talaromyces marneffei (strain ATCC 18224 / CBS 334.59 / QM 7333) (Penicillium marneffei).